A 157-amino-acid polypeptide reads, in one-letter code: MSEAQGFDALASLSSNPEAAAPAVQKIDAQGRAYATGKRKNAIARVWIKPGKGSITINGRDQEVYFARPVLRMMIAQPLQVTDREGQFDIVVTVEGSGLSGQAGAVRHGLSKALTYYEPGLRAALKPHGFLTRDSRVVERKKYGKAKARRSFQFSKR.

It belongs to the universal ribosomal protein uS9 family.

This is Small ribosomal subunit protein uS9 from Caulobacter sp. (strain K31).